The primary structure comprises 310 residues: Oxygen-dependent coproporphyrinogen-III oxidase (310 aa).

Residue Ser-97 coordinates substrate. Positions 101 and 111 each coordinate a divalent metal cation. His-111 acts as the Proton donor in catalysis. Substrate is bound at residue 113–115 (NFR). The a divalent metal cation site is built by His-150 and His-180. An important for dimerization region spans residues 245–280 (YVEFNLLYDRGTRFGLEFGGRTESILMSLPPRVVWR). Position 263–265 (263–265 (GGR)) interacts with substrate.

This sequence belongs to the aerobic coproporphyrinogen-III oxidase family. In terms of assembly, homodimer. A divalent metal cation serves as cofactor.

Its subcellular location is the cytoplasm. It carries out the reaction coproporphyrinogen III + O2 + 2 H(+) = protoporphyrinogen IX + 2 CO2 + 2 H2O. It participates in porphyrin-containing compound metabolism; protoporphyrin-IX biosynthesis; protoporphyrinogen-IX from coproporphyrinogen-III (O2 route): step 1/1. Involved in the heme biosynthesis. Catalyzes the aerobic oxidative decarboxylation of propionate groups of rings A and B of coproporphyrinogen-III to yield the vinyl groups in protoporphyrinogen-IX. In Coxiella burnetii (strain RSA 331 / Henzerling II), this protein is Oxygen-dependent coproporphyrinogen-III oxidase.